The sequence spans 295 residues: Tyrosine recombinase XerC (295 aa).

Positions 1 to 84 (MTLEEQFLSY…SLKSFYRFLT (84 aa)) constitute a Core-binding (CB) domain. Residues 105–289 (KLPEFFYQDE…SMQHLTVEYR (185 aa)) enclose the Tyr recombinase domain. Residues Arg-145, Lys-169, His-241, Arg-244, and His-267 contribute to the active site. The O-(3'-phospho-DNA)-tyrosine intermediate role is filled by Tyr-276.

This sequence belongs to the 'phage' integrase family. XerC subfamily. Forms a cyclic heterotetrameric complex composed of two molecules of XerC and two molecules of XerD.

It localises to the cytoplasm. Site-specific tyrosine recombinase, which acts by catalyzing the cutting and rejoining of the recombining DNA molecules. The XerC-XerD complex is essential to convert dimers of the bacterial chromosome into monomers to permit their segregation at cell division. It also contributes to the segregational stability of plasmids. In Lactobacillus delbrueckii subsp. bulgaricus (strain ATCC 11842 / DSM 20081 / BCRC 10696 / JCM 1002 / NBRC 13953 / NCIMB 11778 / NCTC 12712 / WDCM 00102 / Lb 14), this protein is Tyrosine recombinase XerC.